Consider the following 218-residue polypeptide: Elongation factor Ts (218 aa).

Positions 82–85 (TDFV) are involved in Mg(2+) ion dislocation from EF-Tu.

It belongs to the EF-Ts family.

The protein resides in the cytoplasm. Functionally, associates with the EF-Tu.GDP complex and induces the exchange of GDP to GTP. It remains bound to the aminoacyl-tRNA.EF-Tu.GTP complex up to the GTP hydrolysis stage on the ribosome. The sequence is that of Elongation factor Ts from Prochlorococcus marinus (strain MIT 9211).